The following is a 186-amino-acid chain: UPF0301 protein Saro_0683 (186 aa).

The protein belongs to the UPF0301 (AlgH) family.

The polypeptide is UPF0301 protein Saro_0683 (Novosphingobium aromaticivorans (strain ATCC 700278 / DSM 12444 / CCUG 56034 / CIP 105152 / NBRC 16084 / F199)).